The sequence spans 278 residues: Large ribosomal subunit protein uL2 (278 aa).

The disordered stretch occupies residues 201–278 (HGNINDGKAG…IMRSRHQKKK (78 aa)). Positions 210–221 (GRSRWRGKRPHV) are enriched in basic residues.

The protein belongs to the universal ribosomal protein uL2 family. Part of the 50S ribosomal subunit. Forms a bridge to the 30S subunit in the 70S ribosome.

Functionally, one of the primary rRNA binding proteins. Required for association of the 30S and 50S subunits to form the 70S ribosome, for tRNA binding and peptide bond formation. It has been suggested to have peptidyltransferase activity; this is somewhat controversial. Makes several contacts with the 16S rRNA in the 70S ribosome. The chain is Large ribosomal subunit protein uL2 from Allorhizobium ampelinum (strain ATCC BAA-846 / DSM 112012 / S4) (Agrobacterium vitis (strain S4)).